The primary structure comprises 113 residues: MAGLKDVVTREYTINLHKRLHGVSFKKRAPRAVKEIKKFAKLHMGTDDVRLAPELNQAIWKRGVKGVEYRLRLRISRKRNEEEDAKNPLFSYVEPVLVASAKGLQTVVVEEDA.

This sequence belongs to the eukaryotic ribosomal protein eL31 family. Component of the large ribosomal subunit (LSU). Mature yeast ribosomes consist of a small (40S) and a large (60S) subunit. The 40S small subunit contains 1 molecule of ribosomal RNA (18S rRNA) and 33 different proteins (encoded by 57 genes). The large 60S subunit contains 3 rRNA molecules (25S, 5.8S and 5S rRNA) and 46 different proteins (encoded by 81 genes).

It localises to the cytoplasm. In terms of biological role, component of the ribosome, a large ribonucleoprotein complex responsible for the synthesis of proteins in the cell. The small ribosomal subunit (SSU) binds messenger RNAs (mRNAs) and translates the encoded message by selecting cognate aminoacyl-transfer RNA (tRNA) molecules. The large subunit (LSU) contains the ribosomal catalytic site termed the peptidyl transferase center (PTC), which catalyzes the formation of peptide bonds, thereby polymerizing the amino acids delivered by tRNAs into a polypeptide chain. The nascent polypeptides leave the ribosome through a tunnel in the LSU and interact with protein factors that function in enzymatic processing, targeting, and the membrane insertion of nascent chains at the exit of the ribosomal tunnel. The protein is Large ribosomal subunit protein eL31A of Saccharomyces cerevisiae (strain ATCC 204508 / S288c) (Baker's yeast).